The chain runs to 172 residues: uncharacterized protein (172 aa).

Low complexity predominate over residues 1-28 (MAAAGVTAKAGGGTSAAAASLIRARSPA). Residues 1-172 (MAAAGVTAKA…GGRRSGRDAG (172 aa)) are disordered. The segment covering 58-68 (PRRRSRARRGH) has biased composition (basic residues). Gly residues predominate over residues 80–100 (TVGGEGQASQIGGGGGGGGGR). A compositionally biased stretch (low complexity) spans 129 to 138 (PGLASSPGVA). Over residues 139–165 (PAGGSGGLWSGAGLCSGLGARGFPGGR) the composition is skewed to gly residues.

This is an uncharacterized protein from Homo sapiens (Human).